Consider the following 344-residue polypeptide: Follistatin (344 aa).

Positions 1 to 29 are cleaved as a signal peptide; the sequence is MVRARHQPGGLCLLLLLLCQFMEDRSAQA. The region spanning 30–103 is the TB domain; that stretch reads GNCWLRQAKN…TCENVDCGPG (74 aa). Intrachain disulfides connect C32–C55, C42–C88, C56–C91, C95–C106, C100–C116, C118–C150, C122–C143, C132–C164, C168–C179, C173–C189, C192–C225, C196–C218, C207–C239, C245–C256, C250–C267, C270–C302, C274–C295, and C284–C316. Positions 94 to 117 constitute a Follistatin-like 1 domain; that stretch reads TCENVDCGPGKKCRMNKKNKPRCV. The Kazal-like 1 domain maps to 112-166; it reads NKPRCVCAPDCSNITWKGPVCGLDGKTYRNECALLKARCKEQPELEVQYQGRCKK. The N-linked (GlcNAc...) asparagine glycan is linked to N124. The Follistatin-like 2 domain occupies 167-190; the sequence is TCRDVFCPGSSTCVVDQTNNAYCV. The Kazal-like 2 domain occupies 186–241; the sequence is NAYCVTCNRICPEPASSEQYLCGNDGVTYSSACHLRKATCLLGRSIGLAYEGKCIK. The Follistatin-like 3 domain occupies 244-268; sequence SCEDIQCTGGKKCLWDFKVGRGRCS. Residues 264 to 318 form the Kazal-like 3 domain; it reads RGRCSLCDELCPDSKSDEPVCASDNATYASECAMKEAACSSGVLLEVKHSGSCNS. N-linked (GlcNAc...) asparagine glycosylation occurs at N288. Residues 314 to 344 are disordered; the sequence is GSCNSISEDTEEEEEDEDQDYSFPISSILEW. Positions 321–333 are enriched in acidic residues; it reads EDTEEEEEDEDQD.

As to quaternary structure, interacts with GDF11. Interacts with activin A/INHBA. Interacts with MYOSTATIN/MSTN. Isoform 1 is the predominant isoform in serum but is undetectable in follicular fluid. In the embryo, strong expression is seen in the palatal epithelia, including the medial edge epithelial and midline epithelial seam of the palatal shelves. Less pronounced expression is also seen throughout the palatal shelf and tongue mesenchyme.

The protein resides in the secreted. It is found in the nucleus. Its subcellular location is the nucleolus. Functionally, multifunctional regulatory protein whose primary function is to antagonize members of the transforming growth factor beta (TGF-beta) superfamily including activin, myostatin, GDF11 or bone morphogenetic proteins (BMPs). Mechanistically, binds to these ligands in the extracellular space, blocking their type II receptor-binding site to inhibit downstream signaling. Plays an essential role in muscle fiber formation and growth both by preventing the repressive effects of myostatin and through SMAD3/AKT/mTOR signaling independently of myostatin. Also promotes neural differentiation by antagonizing the action BMP4. Acts as a specific inhibitor of the biosynthesis and secretion of pituitary follicle stimulating hormone (FSH) by sequestering activin A/INHBA. On the other hand, translocates into the nucleus where it down-regulates rRNA synthesis and ribosome biogenesis to maintain cellular energy homeostasis by binding to rDNA. The protein is Follistatin of Homo sapiens (Human).